A 518-amino-acid polypeptide reads, in one-letter code: Glycerophosphoinositol transporter 1 (518 aa).

At 1–44 the chain is on the cytoplasmic side; sequence MEDKDITSVNEKEVNENTNPRIIKYDAERRATRTETSKKDKWKN. A helical transmembrane segment spans residues 45-65; sequence IVTIIASGFALISDGYVNGSM. Topologically, residues 66-91 are extracellular; sequence SMLNKVFVMEYGKKNYSSKVSTRVSN. N-linked (GlcNAc...) asparagine glycosylation occurs at asparagine 80. Residues 92–112 form a helical membrane-spanning segment; that stretch reads AALVGIIFGQFFMGIAADYYS. Over 113-114 the chain is Cytoplasmic; the sequence is RK. The helical transmembrane segment at 115-136 threads the bilayer; that stretch reads SCILVATAILVIGSALCAASHG. Topologically, residues 137 to 138 are extracellular; sequence TT. The helical transmembrane segment at 139 to 159 threads the bilayer; the sequence is VPGMFWMLTVMRGLVGIGVGA. The Cytoplasmic segment spans residues 160-184; sequence EYPTSTLSANESANEYTTTKRGGIL. A helical membrane pass occupies residues 185–205; the sequence is VMVTNLPLAFGGPFATIIFLI. The Extracellular segment spans residues 206-216; that stretch reads VYKICSGTKHL. A helical transmembrane segment spans residues 217 to 237; sequence EAIWRTVFAIGCFWPLSVFYF. Residues 238–268 are Cytoplasmic-facing; it reads RWKTATTEVYEKGRIKRNIPYFLALKFYWKR. A helical membrane pass occupies residues 269–289; that stretch reads LLGTCGTWFMYDFVTFPNGIF. Over 290 to 306 the chain is Extracellular; sequence SSTIISSVIKDQNDLVK. The chain crosses the membrane as a helical span at residues 307-327; the sequence is VAEWNLLLGVLAVLGVPIGAY. At 328–335 the chain is on the cytoplasmic side; it reads LSDRIGRK. Residues 336–356 form a helical membrane-spanning segment; it reads YTLMFGFSGYIIFGLIIGCAY. Topologically, residues 357–360 are extracellular; the sequence is DQLK. Residues 361–381 traverse the membrane as a helical segment; sequence KITPLFIIFYAFMNMLGNAGP. Residues 382-399 lie on the Cytoplasmic side of the membrane; that stretch reads GDMLGVISSEASATAVRG. The helical transmembrane segment at 400–420 threads the bilayer; that stretch reads VFYGLSAVTGKIGSVVGVECF. The Extracellular segment spans residues 421-430; the sequence is QPIRDNLGAR. The chain crosses the membrane as a helical span at residues 431 to 451; that stretch reads WTFIIAAICGLIGIIITYFFV. At 452 to 518 the chain is on the cytoplasmic side; it reads PHSLESDLMK…IISVRQVDQS (67 aa).

This sequence belongs to the major facilitator superfamily. Sugar transporter (TC 2.A.1.1) family.

The protein localises to the cell membrane. It carries out the reaction sn-glycerol 3-phosphocholine(out) = sn-glycerol 3-phosphocholine(in). The enzyme catalyses sn-glycero-3-phospho-1D-myo-inositol(out) = sn-glycero-3-phospho-1D-myo-inositol(in). Glycerophosphodiester transporter that mediates uptake of both glycerophosphoinositol (GroPIns) and glycerophosphocholine (GroPCho) as sources of the nutrients inositol and phosphate. The polypeptide is Glycerophosphoinositol transporter 1 (Saccharomyces cerevisiae (strain ATCC 204508 / S288c) (Baker's yeast)).